The sequence spans 384 residues: Formate dehydrogenase, chloroplastic/mitochondrial (384 aa).

A chloroplast and mitochondrion-targeting transit peptide spans 1 to 29 (MAMRQAAKATIRACSSSSSSGYFARRQFN). Substrate is bound by residues Ile128 and Asn152. NAD(+)-binding positions include 207–208 (RI), Asp227, 262–266 (PLTEK), Asn288, Asp314, and 338–341 (HTSG).

Belongs to the D-isomer specific 2-hydroxyacid dehydrogenase family. FDH subfamily. As to quaternary structure, homodimer.

The protein localises to the mitochondrion. It is found in the plastid. It localises to the chloroplast. The enzyme catalyses formate + NAD(+) = CO2 + NADH. Its function is as follows. Catalyzes the NAD(+)-dependent oxidation of formate to carbon dioxide. Involved in the cell stress response. This is Formate dehydrogenase, chloroplastic/mitochondrial (FDH1) from Arabidopsis thaliana (Mouse-ear cress).